We begin with the raw amino-acid sequence, 391 residues long: MCSQLWFLTDRRIREDYPQVQILRALRQRCSEQDVRFRAVLMDQIAVTIVGGHLGLQLNQKALTTFPDVVLVRVPTPSVQSDSDITVLRHLEKLGCRLVNRPQSILNCINKFWTFQELAGHGVPMPDTFSYGGHEDFSKMIDEAEPLGYPVVVKSTRGHRGKAVFLARDKHHLSDICHLIRHDVPYLFQKYVKESHGKDIRVVVVGGQVIGSMLRCSTDGRMQSNCSLGGVGVKCPLTEQGKQLAIQVSNILGMDFCGIDLLIMDDGSFVVCEANANVGFLAFDQACNLDVGGIIADYTMSLLPNRQTGKMAVLPGLSSPREKNEPDGCASAQGVAESVYTINSGSTSSESEPELGEIRDSSASTMGAPPSMLPEPGYNINNRIASELKLK.

The region spanning 115–300 (FQELAGHGVP…VGGIIADYTM (186 aa)) is the ATP-grasp domain. ATP-binding positions include Lys-154, 189–199 (QKYVKESHGKD), and Arg-215. Residues Asp-260, Glu-273, and Asn-275 each coordinate Mg(2+). Residues Asp-260, Glu-273, and Asn-275 each coordinate Mn(2+). Residue Ser-319 is modified to Phosphoserine. Polar residues predominate over residues 341-350 (TINSGSTSSE). The tract at residues 341–379 (TINSGSTSSESEPELGEIRDSSASTMGAPPSMLPEPGYN) is disordered.

This sequence belongs to the RimK family. The cofactor is Mg(2+). Mn(2+) is required as a cofactor.

The protein resides in the cytoplasm. The catalysed reaction is N-acetyl-L-aspartate + L-glutamate + ATP = N-acetyl-L-aspartyl-L-glutamate + ADP + phosphate + H(+). It carries out the reaction N-acetyl-L-aspartate + 2 L-glutamate + 2 ATP = N-acetyl-L-aspartyl-L-glutamyl-L-glutamate + 2 ADP + 2 phosphate + 2 H(+). In terms of biological role, catalyzes the synthesis of N-acetyl-L-aspartyl-L-glutamate (NAAG) and N-acetyl-L-aspartyl-L-glutamyl-L-glutamate. The sequence is that of N-acetylaspartylglutamate synthase A (RIMKLA) from Homo sapiens (Human).